The primary structure comprises 93 residues: UPF0358 protein lmo1070 (93 aa).

Belongs to the UPF0358 family.

The polypeptide is UPF0358 protein lmo1070 (Listeria monocytogenes serovar 1/2a (strain ATCC BAA-679 / EGD-e)).